The chain runs to 20 residues: GLLGSIGNAIGAFIANKLKP.

As to expression, expressed by the skin dorsal glands.

The protein localises to the secreted. In terms of biological role, has no antimicrobial activity. Strongly inhibits the formation of NO by neuronal nitric oxide synthase at micromolar concentrations. Acts by a non-competitive mechanism, probably by binding to calcium/calmodulin and as a consequence blocking calmodulin attachment to nNOS. This is Dahlein-5.1 from Ranoidea dahlii (Dahl's aquatic frog).